The following is a 249-amino-acid chain: Aspartate/glutamate leucyltransferase (249 aa).

This sequence belongs to the R-transferase family. Bpt subfamily.

It is found in the cytoplasm. It catalyses the reaction N-terminal L-glutamyl-[protein] + L-leucyl-tRNA(Leu) = N-terminal L-leucyl-L-glutamyl-[protein] + tRNA(Leu) + H(+). It carries out the reaction N-terminal L-aspartyl-[protein] + L-leucyl-tRNA(Leu) = N-terminal L-leucyl-L-aspartyl-[protein] + tRNA(Leu) + H(+). Its function is as follows. Functions in the N-end rule pathway of protein degradation where it conjugates Leu from its aminoacyl-tRNA to the N-termini of proteins containing an N-terminal aspartate or glutamate. In Xanthobacter autotrophicus (strain ATCC BAA-1158 / Py2), this protein is Aspartate/glutamate leucyltransferase.